Here is a 545-residue protein sequence, read N- to C-terminus: CTP synthase (545 aa).

The interval 1–266 (MTTNYIFVTG…DDYICKRFGL (266 aa)) is amidoligase domain. A CTP-binding site is contributed by serine 14. Position 14 (serine 14) interacts with UTP. Residues 15–20 (SLGKGI) and aspartate 72 each bind ATP. Mg(2+) is bound by residues aspartate 72 and glutamate 140. CTP-binding positions include 147–149 (DIE), 187–192 (KTKPTQ), and lysine 223. Residues 187 to 192 (KTKPTQ) and lysine 223 contribute to the UTP site. Residue 239–241 (KDV) participates in ATP binding. One can recognise a Glutamine amidotransferase type-1 domain in the interval 291 to 542 (TIGMVGKYIA…VKAAGEYQKR (252 aa)). Glycine 352 provides a ligand contact to L-glutamine. Residue cysteine 379 is the Nucleophile; for glutamine hydrolysis of the active site. Residues 380–383 (LGMQ), glutamate 403, and arginine 470 contribute to the L-glutamine site. Active-site residues include histidine 515 and glutamate 517.

It belongs to the CTP synthase family. In terms of assembly, homotetramer.

The catalysed reaction is UTP + L-glutamine + ATP + H2O = CTP + L-glutamate + ADP + phosphate + 2 H(+). It catalyses the reaction L-glutamine + H2O = L-glutamate + NH4(+). The enzyme catalyses UTP + NH4(+) + ATP = CTP + ADP + phosphate + 2 H(+). Its pathway is pyrimidine metabolism; CTP biosynthesis via de novo pathway; CTP from UDP: step 2/2. Allosterically activated by GTP, when glutamine is the substrate; GTP has no effect on the reaction when ammonia is the substrate. The allosteric effector GTP functions by stabilizing the protein conformation that binds the tetrahedral intermediate(s) formed during glutamine hydrolysis. Inhibited by the product CTP, via allosteric rather than competitive inhibition. Functionally, catalyzes the ATP-dependent amination of UTP to CTP with either L-glutamine or ammonia as the source of nitrogen. Regulates intracellular CTP levels through interactions with the four ribonucleotide triphosphates. This Sodalis glossinidius (strain morsitans) protein is CTP synthase.